The sequence spans 96 residues: Dynein light chain roadblock-type 2 (96 aa).

Alanine 2 carries the post-translational modification N-acetylalanine.

It belongs to the GAMAD family. In terms of assembly, homodimer. The cytoplasmic dynein 1 complex consists of two catalytic heavy chains (HCs) and a number of non-catalytic subunits presented by intermediate chains (ICs), light intermediate chains (LICs) and light chains (LCs); the composition seems to vary in respect to the IC, LIC and LC composition. The heavy chain homodimer serves as a scaffold for the probable homodimeric assembly of the respective non-catalytic subunits. The ICs and LICs bind directly to the HC dimer and the LCs assemble on the IC dimer. Interacts with DYNC1I1 and DYNC1I2. Self-associates. Interacts with DYNLRB1. High expression in heart, brain, placenta, skeletal muscle, prostate and small intestine; moderate in kidney, pancreas, spleen, testis, ovary and colon; low in lung, liver, thymus and leukocyte.

Its subcellular location is the cytoplasm. It localises to the cytoskeleton. In terms of biological role, acts as one of several non-catalytic accessory components of the cytoplasmic dynein 1 complex that are thought to be involved in linking dynein to cargos and to adapter proteins that regulate dynein function. Cytoplasmic dynein 1 acts as a motor for the intracellular retrograde motility of vesicles and organelles along microtubules. The chain is Dynein light chain roadblock-type 2 (DYNLRB2) from Homo sapiens (Human).